The chain runs to 182 residues: Large ribosomal subunit protein bL17 (182 aa).

Residues E126 to K182 form a disordered region. Positions K137–E149 are enriched in basic and acidic residues. 2 stretches are compositionally biased toward acidic residues: residues E150–T161 and E170–K182.

The protein belongs to the bacterial ribosomal protein bL17 family. Part of the 50S ribosomal subunit. Contacts protein L32.

The polypeptide is Large ribosomal subunit protein bL17 (Corynebacterium jeikeium (strain K411)).